The following is a 71-amino-acid chain: Small ribosomal subunit protein bS21 (71 aa).

The segment at 47-71 (RENATRAKRHAKRVARENARNTRLY) is disordered. The span at 60 to 71 (VARENARNTRLY) shows a compositional bias: basic and acidic residues.

The protein belongs to the bacterial ribosomal protein bS21 family.

In Histophilus somni (strain 129Pt) (Haemophilus somnus), this protein is Small ribosomal subunit protein bS21.